Consider the following 476-residue polypeptide: Oogenesin-2 (476 aa).

One copy of the LRR 1; degenerate repeat lies at 97 to 121 (RCKLREITLSHDLVVVWAGSHEVEG). The stretch at 176–200 (HLHCRKLKIYGLTKAAVIEMFKIVH) is one LRR 2; degenerate repeat. Residues 201-226 (AEYIEDLELSCLCLEYLDFLNPYLKQ) form an LRR 3; degenerate repeat. The stretch at 227–264 (MSNLLSLTLDEIIYTLNIDDYRNLNEEKVITVISHLPT) is one LRR 4; degenerate repeat. LRR repeat units lie at residues 265–285 (FHHL…LRCL), 286–317 (KKPL…FELR), 342–369 (RHTL…ALSQ), and 370–394 (CYQL…LLHH).

The protein belongs to the PRAME family. As to expression, expressed in ovary, specifically in oocytes. Detected in follicles with two layers of granulosa cells, and are present in early as well as large antral follicles.

The chain is Oogenesin-2 from Mus musculus (Mouse).